Reading from the N-terminus, the 634-residue chain is Transmembrane and coiled-coil domain-containing protein 4 (634 aa).

A coiled-coil region spans residues 150–190; sequence EELDVLEEMFLESLKEIKEEESEMAEASRKKKENRRKWKRY. 3 consecutive transmembrane segments (helical) span residues 203–223, 231–251, and 346–366; these read VIGV…ATII, LGSA…GAGL, and LSGI…ANVI. A disordered region spans residues 542 to 612; it reads EPRQAAAAAS…ERPPICSHGM (71 aa). Over residues 552-583 the composition is skewed to polar residues; it reads SGETPHQVGQTQGPISGDTSKLAMSTDPSQAQ.

It belongs to the TMCO4 family.

It localises to the membrane. In Homo sapiens (Human), this protein is Transmembrane and coiled-coil domain-containing protein 4 (TMCO4).